A 326-amino-acid chain; its full sequence is Photosystem II assembly factor Ycf39 (326 aa).

This sequence belongs to the NmrA-type oxidoreductase family. Ycf39 subfamily. In terms of assembly, purified in several chlorophyll- and carotenoid-containing complexes, including photosystem II (PSII) assembly intermediate complex RCII* (iD1, D1, D2, PsbE, PsbF, PsbI, Ycf39, Ycf48, HliC and HliD) and the Ycf39-Hlip complex (Ycf39, HliC, HliD and pigments). Tagged protein does not pull down mature PSII.

The protein localises to the cellular thylakoid membrane. Requires HliD to bind pigments. The Ycf39-Hlip complex binds D1 at an early stage of PSII assembly along with Ycf48, ribosomes and ChlG, the last enzyme in chlorophyll biosynthesis; it may be involved in chlorophyll reuse and delivery to D1 in the initial stages of PSII assembly. The Ycf39-Hlip complex efficiently quenches chlorophyll fluorescence, contributing to photoprotection. The polypeptide is Photosystem II assembly factor Ycf39 (Synechocystis sp. (strain ATCC 27184 / PCC 6803 / Kazusa)).